The sequence spans 236 residues: 2,3,4,5-tetrahydropyridine-2,6-dicarboxylate N-acetyltransferase (236 aa).

This sequence belongs to the transferase hexapeptide repeat family. DapH subfamily.

The catalysed reaction is (S)-2,3,4,5-tetrahydrodipicolinate + acetyl-CoA + H2O = L-2-acetamido-6-oxoheptanedioate + CoA. Its pathway is amino-acid biosynthesis; L-lysine biosynthesis via DAP pathway; LL-2,6-diaminopimelate from (S)-tetrahydrodipicolinate (acetylase route): step 1/3. Functionally, catalyzes the transfer of an acetyl group from acetyl-CoA to tetrahydrodipicolinate. The chain is 2,3,4,5-tetrahydropyridine-2,6-dicarboxylate N-acetyltransferase from Listeria monocytogenes serotype 4b (strain CLIP80459).